We begin with the raw amino-acid sequence, 458 residues long: MQRPWAEPYKIKAVEPIRMTTREYREQAIREAGYNTFLLRSEDVYIDLLTDSGTNAMSDRQWGALMMGDEAYAGARSFFRLEEAVREIYGFKYVVPTHQGRGAEHLISRILIKPGDYIPGNMYFTTTRTHQELQGGTFVDVIIDEAHDPQANHPFKGNVDIAKFEALIDRVGADKIPYINVALTVNMAGGQPVSMANLREVRKVCDRHGIRMWSDATRAVENAYFIKEREEGYQDKPVREILKEMMSYFDGCTMSGKKDCLVNIGGFLAMNEEWILQKAREQVVIFEGMPTYGGLAGRDMEAIAQGIYEMVDDDYIAHRIHQVRYLGEQLLEAGIPIVQPIGGHAVFLDARAFLPHIPQDQFPAQALAAALYVDSGVRAMERGIVSAGRNPQTGEHNYPKLELVRLTIPRRVYTDRHMDVVAYSVKHLWKERDTIRGLRMVYEPPTLRFFTARFEPIS.

Lysine 258 is modified (N6-(pyridoxal phosphate)lysine).

Belongs to the beta-eliminating lyase family. In terms of assembly, homotetramer. The cofactor is pyridoxal 5'-phosphate.

It carries out the reaction L-tyrosine + H2O = phenol + pyruvate + NH4(+). The sequence is that of Tyrosine phenol-lyase (tpl) from Symbiobacterium sp. (strain SC-1).